The following is a 252-amino-acid chain: tRNA (guanine-N(1)-)-methyltransferase (252 aa).

Residues glycine 113 and 133-138 (IGDYVL) each bind S-adenosyl-L-methionine.

Belongs to the RNA methyltransferase TrmD family. As to quaternary structure, homodimer.

The protein localises to the cytoplasm. The catalysed reaction is guanosine(37) in tRNA + S-adenosyl-L-methionine = N(1)-methylguanosine(37) in tRNA + S-adenosyl-L-homocysteine + H(+). Functionally, specifically methylates guanosine-37 in various tRNAs. The protein is tRNA (guanine-N(1)-)-methyltransferase of Xanthomonas campestris pv. campestris (strain B100).